The following is a 20-amino-acid chain: Peptidase T (20 aa).

Belongs to the peptidase M20B family. Requires Zn(2+) as cofactor. Co(2+) is required as a cofactor.

The protein localises to the cell envelope. The enzyme catalyses Release of the N-terminal residue from a tripeptide.. Inhibited by the chelating agents EDTA and 1,10-phenanthroline, by bestatin and amastatin, p-hydroxymercuribenzoate and some divalent cations at high concentration. Cleaves a wide range of dipeptides and tripeptides, but does not display activity against larger peptides. May have a role in the survival of F.nucleatum in the subgingival environment of the mouth. In Fusobacterium nucleatum subsp. polymorphum (Fusobacterium polymorphum), this protein is Peptidase T (pepT).